The primary structure comprises 128 residues: Fluoride-specific ion channel FluC (128 aa).

The next 4 membrane-spanning stretches (helical) occupy residues 5–25 (LFISCGAILGASLRWAIGLLF), 34–54 (FGALIANLLGCLIIGVLLGLF), 67–87 (FLITGFLGSLTTFSSFSSEVV), and 99–119 (FCVLMMHLFGCLAMTVLGIWI). Na(+) contacts are provided by glycine 74 and threonine 77.

It belongs to the fluoride channel Fluc/FEX (TC 1.A.43) family.

It localises to the cell inner membrane. The catalysed reaction is fluoride(in) = fluoride(out). Na(+) is not transported, but it plays an essential structural role and its presence is essential for fluoride channel function. Functionally, fluoride-specific ion channel. Important for reducing fluoride concentration in the cell, thus reducing its toxicity. The polypeptide is Fluoride-specific ion channel FluC (Haemophilus influenzae (strain PittEE)).